Consider the following 27-residue polypeptide: Voltage-dependent anion-selective channel protein (27 aa).

Belongs to the eukaryotic mitochondrial porin family. As to quaternary structure, interacts with hexokinases. As to expression, photoreceptors.

Its subcellular location is the mitochondrion outer membrane. Forms a channel through the cell membrane that allows diffusion of small hydrophilic molecules. The sequence is that of Voltage-dependent anion-selective channel protein from Doryteuthis pealeii (Longfin inshore squid).